Here is a 1289-residue protein sequence, read N- to C-terminus: uncharacterized protein (1289 aa).

An MHD1 domain is found at 615-733 (LDMYDVLKEL…DGMLSYSAQL (119 aa)). Residues 745 to 774 (DEPSYSLESSDTRSSLSLNNANVNHEKSRS) form a disordered region. Low complexity predominate over residues 748 to 762 (SYSLESSDTRSSLSL). Residues 834–966 (AQYHSSHNLE…DDGFPIDFSL (133 aa)) form the C2 domain. One can recognise an MHD2 domain in the interval 1044 to 1184 (YDAILPLFDY…KSVSELKDEV (141 aa)).

Its subcellular location is the cytoplasm. This is an uncharacterized protein from Saccharomyces cerevisiae (strain ATCC 204508 / S288c) (Baker's yeast).